A 358-amino-acid polypeptide reads, in one-letter code: Snurportin-1 (358 aa).

M1 carries the post-translational modification N-acetylmethionine. Disordered regions lie at residues 1-26 (MEEL…APHP) and 69-90 (DWTG…MDID). Residues 1-65 (MEELSQALAS…LDYVNHARRL (65 aa)) form a necessary for interaction with KPNB1 and m3G-cap U1 and U5 snRNP import receptor activity region. The tract at residues 1–160 (MEELSQALAS…NRFSSLLPGG (160 aa)) is necessary for interaction with XPO1. Over residues 7–22 (ALASSFSVSQELNSTA) the composition is skewed to polar residues. Residues 11-73 (SFSVSQELNS…RLAEDDWTGM (63 aa)) enclose the IBB domain. Residue S75 is modified to Phosphoserine. Positions 128 to 130 (GKR) are interaction with m3G-cap structure. The segment at 210-329 (MHSKLPEEEG…DTKEKLTHKA (120 aa)) is necessary for binding to the m3G-cap structure. Basic and acidic residues predominate over residues 315-341 (KRSQEDTKEKLTHKASENGHYELEHLS). Residues 315–358 (KRSQEDTKEKLTHKASENGHYELEHLSTPKLRNPPHSSESLMDN) are disordered. The span at 349 to 358 (PHSSESLMDN) shows a compositional bias: polar residues. Phosphoserine is present on S351.

Belongs to the snurportin family. Component of an import snRNP complex composed of KPNB1, SNUPN, SMN1 and ZNF259. Component of a nuclear export receptor complex composed of KPNB1, Ran, SNUPN and XPO1. Found in a trimeric export complex with SNUPN, Ran and XPO1. Interacts (via IBB domain) with KPNB1; the interaction is direct. Interacts with DDX20, IPO7, SMN1, SNRPB and XPO1. Interacts directly with XPO1. Its interaction with XPO1 and binding to m3G-cap U snRNPs appears to be mutually exclusive. Can form homomers.

It localises to the nucleus. The protein localises to the cytoplasm. In terms of biological role, functions as an U snRNP-specific nuclear import adapter. Involved in the trimethylguanosine (m3G)-cap-dependent nuclear import of U snRNPs. Binds specifically to the terminal m3G-cap U snRNAs. This Mus musculus (Mouse) protein is Snurportin-1 (Snupn).